The following is a 438-amino-acid chain: Shikimate transporter (438 aa).

A run of 12 helical transmembrane segments spans residues 28-48, 64-84, 109-129, 133-153, 168-188, 193-213, 255-275, 287-307, 318-337, 341-363, 387-407, and 411-431; these read FAGA…AALV, LAAF…GVIF, ALIG…ILLV, AIQG…SVES, VGYG…SMMT, FLSW…LGAL, IIAL…FALN, LFLN…PCFA, VYIT…FMAL, SIFW…VVCV, VASV…ITYF, and WHSV…TALL.

The protein belongs to the major facilitator superfamily. Metabolite:H+ Symporter (MHS) family (TC 2.A.1.6) family.

The protein resides in the cell inner membrane. It carries out the reaction shikimate(in) + H(+)(in) = shikimate(out) + H(+)(out). In terms of biological role, involved in the uptake of shikimate, an intermediate in the aromatic amino acid biosynthetic pathway. The sequence is that of Shikimate transporter from Escherichia coli (strain K12).